The following is a 135-amino-acid chain: Large ribosomal subunit protein uL16c (135 aa).

The protein belongs to the universal ribosomal protein uL16 family. Part of the 50S ribosomal subunit.

It is found in the plastid. Its subcellular location is the chloroplast. The polypeptide is Large ribosomal subunit protein uL16c (Morus indica (Mulberry)).